We begin with the raw amino-acid sequence, 835 residues long: BCL11 transcription factor A (835 aa).

Residues 1–12 (MSRRKQGKPQHL) show a composition bias toward basic residues. The disordered stretch occupies residues 1–41 (MSRRKQGKPQHLSKREFSPEPLEAILTDDEPDHGPLGAPEG). The interval 1–210 (MSRRKQGKPQ…SEHGSPLTPR (210 aa)) is required for nuclear body formation and for SUMO1 recruitment. A C2HC-type zinc finger spans residues 45–71 (LLTCGQCQMNFPLGDILIFIEHKRKQC). Cysteine 48, cysteine 51, histidine 66, and cysteine 71 together coordinate Zn(2+). Serine 86 carries the post-translational modification Phosphoserine. Residues lysine 123 and lysine 164 each participate in a glycyl lysine isopeptide (Lys-Gly) (interchain with G-Cter in SUMO2) cross-link. The C2H2-type 1 zinc finger occupies 170–193 (YTCTTCKQPFTSAWFLLQHAQNTH). A Phosphoserine modification is found at serine 205. Residue arginine 271 is modified to Asymmetric dimethylarginine. The interval 323–376 (AGNTSSPPLSPGRPSPMQRLLQPFQPGSKPPFLATPPLPPLQSAPPPSQPPVKS) is disordered. Serine 332 and serine 337 each carry phosphoserine. The segment covering 355 to 372 (LATPPLPPLQSAPPPSQP) has biased composition (pro residues). C2H2-type zinc fingers lie at residues 377 to 399 (KSCEFCGKTFKFQSNLVVHRRSH) and 405 to 429 (YKCNLCDHACTQASKLKRHMKTHMH). Residues 421 to 430 (KRHMKTHMHK) show a composition bias toward basic residues. 3 disordered regions span residues 421 to 458 (KRHMKTHMHKSSPMTVKSDDGLSTASSPEPGTSDLVGS), 471 to 512 (KSEN…ERVD), and 572 to 619 (RGHL…GLSK). Positions 441-450 (GLSTASSPEP) are enriched in polar residues. Serine 446 and serine 447 each carry phosphoserine. Residues 482 to 506 (NGDEEEEEDDEEEEEEEEEEEEELT) show a composition bias toward acidic residues. Residues 574 to 584 (HLAEAEGHRDT) are compositionally biased toward basic and acidic residues. At serine 608 the chain carries Phosphoserine. A Glycyl lysine isopeptide (Lys-Gly) (interchain with G-Cter in SUMO2) cross-link involves residue lysine 620. Residues serine 625 and serine 630 each carry the phosphoserine modification. Residue lysine 634 forms a Glycyl lysine isopeptide (Lys-Gly) (interchain with G-Cter in SUMO1) linkage. Positions 678 to 740 (DSRQSPFASS…GRPSSKEGRR (63 aa)) are disordered. A compositionally biased stretch (low complexity) spans 682–696 (SPFASSSEHSSENGS). Threonine 701 is modified (phosphothreonine). Residues 706 to 720 (LDGGISGRSGTGSGG) show a composition bias toward gly residues. Positions 737–835 (EGRRSDTCEY…RVLNNDIKTE (99 aa)) are DNA-binding. The C2H2-type 4 zinc finger occupies 742-764 (DTCEYCGKVFKNCSNLTVHRRSH). Positions 744, 747, 760, and 764 each coordinate Zn(2+). The interval 765–769 (TGERP) is disordered. Residues 770–792 (YKCELCNYACAQSSKLTRHMKTH) form a C2H2-type 5 zinc finger. Residues cysteine 772, cysteine 775, histidine 788, and histidine 792 each contribute to the Zn(2+) site. The segment at 793-799 (GQVGKDV) is disordered. Residues 800 to 823 (YKCEICKMPFSVYSTLEKHMKKWH) form a C2H2-type 6 zinc finger. Zn(2+) is bound by residues cysteine 802, cysteine 805, histidine 818, and histidine 823. Lysine 833 is covalently cross-linked (Glycyl lysine isopeptide (Lys-Gly) (interchain with G-Cter in SUMO2)).

In terms of assembly, homotetrameric; self-associates via C2HC-type zinc finger domain. Interacts with MTA2, a component of the nucleosome remodeling and deacetylase (NuRD) repressor complex. Interacts (via its C2H2-type zinc finger domains 4, 5 and 6) with promoter region of gamma-globulin. Interacts with NR2F1, PIAS3, NR2F2 and NR2F6. Isoform 1, isoform 2 and isoform 3 form homodimers and heterodimers. Isoform 2 interacts with TBR1. Sumoylated with SUMO1. As to expression, expressed at high levels in brain, spleen thymus, bone marrow and testis. Expressed in CD34-positive myeloid precursor cells, B-cells, monocytes and megakaryocytes. Expression is tightly regulated during B-cell development. In terms of tissue distribution, expressed in fetal and adult brain, and in the plasmacytoid dendritic cell.

The protein localises to the cytoplasm. Its subcellular location is the nucleus. The protein resides in the chromosome. It is found in the nucleus matrix. Transcription factor. Associated with the BAF SWI/SNF chromatin remodeling complex. Binds to the 5'-TGACCA-3' sequence motif in regulatory regions of target genes, including a distal promoter of the HBG1 hemoglobin subunit gamma-1 gene. Involved in regulation of the developmental switch from gamma- to beta-globin, probably via direct repression of HBG1; hence indirectly repressing fetal hemoglobin (HbF) level. Involved in brain development. May play a role in hematopoiesis. Essential factor in lymphopoiesis required for B-cell formation in fetal liver. May function as a modulator of the transcriptional repression activity of NR2F2. In Homo sapiens (Human), this protein is BCL11 transcription factor A (BCL11A).